Here is a 460-residue protein sequence, read N- to C-terminus: Cobyrinate a,c-diamide synthase (460 aa).

In terms of domain architecture, GATase cobBQ-type spans 248–440; sequence KIAVARDAAF…THFHFGSSTK (193 aa). Residue C331 is the Nucleophile of the active site.

The protein belongs to the CobB/CbiA family. Requires Mg(2+) as cofactor.

The catalysed reaction is cob(II)yrinate + 2 L-glutamine + 2 ATP + 2 H2O = cob(II)yrinate a,c diamide + 2 L-glutamate + 2 ADP + 2 phosphate + 2 H(+). Its pathway is cofactor biosynthesis; adenosylcobalamin biosynthesis; cob(II)yrinate a,c-diamide from sirohydrochlorin (anaerobic route): step 10/10. Functionally, catalyzes the ATP-dependent amidation of the two carboxylate groups at positions a and c of cobyrinate, using either L-glutamine or ammonia as the nitrogen source. This Priestia megaterium (Bacillus megaterium) protein is Cobyrinate a,c-diamide synthase.